The sequence spans 458 residues: Paired box protein Pax-8 (458 aa).

Positions 18-144 form a DNA-binding region, paired; sequence GHGGLNQLGG…SSINRIIRTK (127 aa). The tract at residues 21–77 is PAI subdomain; sequence GLNQLGGAFVNGRPLPEVVRQRIVDLAHQGVRPCDISRQLRVSHGCVSKILGRYYET. An RED subdomain region spans residues 96–144; it reads KVVEKIGDYKRQNPTMFAWEIRDRLLAEGVCDNDTVPSVSSINRIIRTK. The tract at residues 198-217 is disordered; the sequence is PGADGKRKLDDSDQESCRLS.

The protein resides in the nucleus. Its function is as follows. Probable transcription factor. Involved in kidney development, acting synergistically with lhx1/lim-1 to establish the pronephric primordium in late gastrulae/early neurulae. This chain is Paired box protein Pax-8, found in Xenopus tropicalis (Western clawed frog).